The primary structure comprises 66 residues: Large ribosomal subunit protein bL31 (66 aa).

4 residues coordinate Zn(2+): C16, C18, C36, and C39.

The protein belongs to the bacterial ribosomal protein bL31 family. Type A subfamily. In terms of assembly, part of the 50S ribosomal subunit. It depends on Zn(2+) as a cofactor.

Binds the 23S rRNA. The polypeptide is Large ribosomal subunit protein bL31 (Desulforamulus reducens (strain ATCC BAA-1160 / DSM 100696 / MI-1) (Desulfotomaculum reducens)).